The sequence spans 90 residues: Glycine and tyrosine-rich protein (90 aa).

Positions 1–21 are cleaved as a signal peptide; it reads MRRSVLVVFLVLAVTNVAVEA.

In terms of tissue distribution, prismatic layer of shell (at protein level).

The protein resides in the secreted. This is Glycine and tyrosine-rich protein from Pinctada maxima (Silver-lipped pearl oyster).